A 77-amino-acid polypeptide reads, in one-letter code: Acyl carrier protein (77 aa).

Residues 1 to 76 (MSLEDDVKSI…DVITYIKTRQ (76 aa)) enclose the Carrier domain. Ser36 bears the O-(pantetheine 4'-phosphoryl)serine mark.

The protein belongs to the acyl carrier protein (ACP) family. 4'-phosphopantetheine is transferred from CoA to a specific serine of apo-ACP by AcpS. This modification is essential for activity because fatty acids are bound in thioester linkage to the sulfhydryl of the prosthetic group.

Its subcellular location is the cytoplasm. It functions in the pathway lipid metabolism; fatty acid biosynthesis. Carrier of the growing fatty acid chain in fatty acid biosynthesis. This chain is Acyl carrier protein, found in Chlamydia caviae (strain ATCC VR-813 / DSM 19441 / 03DC25 / GPIC) (Chlamydophila caviae).